The primary structure comprises 207 residues: Ribosomal RNA small subunit methyltransferase G (207 aa).

S-adenosyl-L-methionine contacts are provided by residues glycine 73, leucine 78, 124–125 (VE), and arginine 139.

This sequence belongs to the methyltransferase superfamily. RNA methyltransferase RsmG family.

The protein localises to the cytoplasm. It catalyses the reaction guanosine(527) in 16S rRNA + S-adenosyl-L-methionine = N(7)-methylguanosine(527) in 16S rRNA + S-adenosyl-L-homocysteine. Its function is as follows. Specifically methylates the N7 position of guanine in position 527 of 16S rRNA. This chain is Ribosomal RNA small subunit methyltransferase G, found in Shigella flexneri.